Here is a 302-residue protein sequence, read N- to C-terminus: Quinolinate synthase (302 aa).

Iminosuccinate-binding residues include H25 and S42. C87 contacts [4Fe-4S] cluster. Iminosuccinate-binding positions include 113–115 (YVN) and S130. C172 lines the [4Fe-4S] cluster pocket. Residues 198 to 200 (HPE) and T215 each bind iminosuccinate. [4Fe-4S] cluster is bound at residue C260.

Belongs to the quinolinate synthase family. Type 2 subfamily. The cofactor is [4Fe-4S] cluster.

Its subcellular location is the cytoplasm. It carries out the reaction iminosuccinate + dihydroxyacetone phosphate = quinolinate + phosphate + 2 H2O + H(+). It participates in cofactor biosynthesis; NAD(+) biosynthesis; quinolinate from iminoaspartate: step 1/1. Its function is as follows. Catalyzes the condensation of iminoaspartate with dihydroxyacetone phosphate to form quinolinate. The protein is Quinolinate synthase of Methanoregula boonei (strain DSM 21154 / JCM 14090 / 6A8).